A 400-amino-acid chain; its full sequence is NADH dehydrogenase-like protein MT1860 (400 aa).

It belongs to the NADH dehydrogenase family. Requires FAD as cofactor.

This Mycobacterium tuberculosis (strain CDC 1551 / Oshkosh) protein is NADH dehydrogenase-like protein MT1860.